Reading from the N-terminus, the 1117-residue chain is A disintegrin and metalloproteinase with thrombospondin motifs 6 (1117 aa).

A signal peptide spans 1–21; it reads MEILWKTLTWILSLIMASSEF. Positions 22-244 are excised as a propeptide; sequence HSDHRLSYSS…NTHIHHRQKR (223 aa). Asn99, Asn172, Asn222, and Asn234 each carry an N-linked (GlcNAc...) asparagine glycan. The Peptidase M12B domain maps to 250 to 468; the sequence is RFVETLVVAD…GRGTCLDNEP (219 aa). 11 disulfide bridges follow: Cys326/Cys387, Cys362/Cys369, Cys381/Cys463, Cys420/Cys447, Cys490/Cys512, Cys501/Cys519, Cys507/Cys542, Cys532/Cys547, Cys570/Cys607, Cys574/Cys612, and Cys585/Cys597. His403 is a Zn(2+) binding site. The active site involves Glu404. Zn(2+) is bound by residues His407 and His413. The Disintegrin domain occupies 495 to 557; that stretch reads GATSRQCKYG…VPFGTWPQSI (63 aa). Positions 558–613 constitute a TSP type-1 1 domain; sequence DGGWGPWSLWGECSRTCGGGVSSSLRHCDSPAPSGGGKYCLGERKRYRSCNTDPCP. Residues 717 to 843 form a spacer region; that stretch reads DAIEGFFNDS…GSGDNEVGFT (127 aa). Asn724 is a glycosylation site (N-linked (GlcNAc...) asparagine). 4 consecutive TSP type-1 domains span residues 840 to 900, 902 to 960, 962 to 1007, and 1018 to 1073; these read VGFT…EPCP, EWFI…QSCP, QWVA…SKPP, and PPPR…SKCD. Intrachain disulfides connect Cys911-Cys954, Cys915-Cys959, and Cys926-Cys943. Residue Asn956 is glycosylated (N-linked (GlcNAc...) asparagine). One can recognise a PLAC domain in the interval 1079–1117; it reads NTEECKDVNKVAYCPLVLKFKFCSRAYFRQMCCKTCQGH.

Zn(2+) is required as a cofactor. In terms of processing, the precursor is cleaved by a furin endopeptidase. Glycosylated. Can be O-fucosylated by POFUT2 on a serine or a threonine residue found within the consensus sequence C1-X(2)-(S/T)-C2-G of the TSP type-1 repeat domains where C1 and C2 are the first and second cysteine residue of the repeat, respectively. Fucosylated repeats can then be further glycosylated by the addition of a beta-1,3-glucose residue by the glucosyltransferase, B3GALTL. Fucosylation mediates the efficient secretion of ADAMTS family members. Can also be C-glycosylated with one or two mannose molecules on tryptophan residues within the consensus sequence W-X-X-W of the TPRs, and N-glycosylated. These other glycosylations can also facilitate secretion. As to expression, expressed at low levels in placenta and barely detectable in a number of other tissues.

It is found in the secreted. The protein localises to the extracellular space. The protein resides in the extracellular matrix. In Homo sapiens (Human), this protein is A disintegrin and metalloproteinase with thrombospondin motifs 6 (ADAMTS6).